A 278-amino-acid chain; its full sequence is Small ribosomal subunit protein uS3 (278 aa).

The region spanning 39–107 is the KH type-2 domain; it reads LRKAISKKYV…KVQLNIVEIS (69 aa). Residues 255-278 form a disordered region; the sequence is AEIPAEEKPKRVVKKAENITKEEE.

This sequence belongs to the universal ribosomal protein uS3 family. In terms of assembly, part of the 30S ribosomal subunit. Forms a tight complex with proteins S10 and S14.

In terms of biological role, binds the lower part of the 30S subunit head. Binds mRNA in the 70S ribosome, positioning it for translation. In Dehalococcoides mccartyi (strain ATCC BAA-2100 / JCM 16839 / KCTC 5957 / BAV1), this protein is Small ribosomal subunit protein uS3.